Consider the following 940-residue polypeptide: Gamma-aminobutyric acid type B receptor subunit 2 (940 aa).

Positions 1–40 are cleaved as a signal peptide; sequence MASPPSSGQPRPPPPPPPPARLLLPLLLSLLLSLAPGAWG. Residues 41–482 are Extracellular-facing; that stretch reads WARGAPRPPP…LRKISLPLYS (442 aa). Asparagine 89 carries an N-linked (GlcNAc...) asparagine glycan. Cystine bridges form between cysteine 107-cysteine 134, cysteine 236-cysteine 265, and cysteine 264-cysteine 301. N-linked (GlcNAc...) asparagine glycans are attached at residues asparagine 297, asparagine 388, asparagine 403, and asparagine 452. A helical membrane pass occupies residues 483-503; sequence ILSALTILGMIMASAFLFFNI. Residues 504 to 521 lie on the Cytoplasmic side of the membrane; the sequence is KNRNQKLIKMSSPYMNNL. A helical membrane pass occupies residues 522–542; the sequence is IILGGMLSYASIFLFGLDGSF. The Extracellular portion of the chain corresponds to 543–550; it reads VSEKTFET. A helical membrane pass occupies residues 551 to 571; sequence LCTVRTWILTVGYTTAFGAMF. Topologically, residues 572–596 are cytoplasmic; it reads AKTWRVHAIFKNVKMKKKIIKDQKL. Residues 597-617 traverse the membrane as a helical segment; the sequence is LVIVGGMLLIDLCILICWQAV. Topologically, residues 618–653 are extracellular; the sequence is DPLRRTVERYSMEPDPAGRDISIRPLLEHCENTHMT. Residues 654–674 traverse the membrane as a helical segment; sequence IWLGIVYAYKGLLMLFGCFLA. Topologically, residues 675-690 are cytoplasmic; it reads WETRNVSIPALNDSKY. Residues 691 to 711 traverse the membrane as a helical segment; it reads IGMSVYNVGIMCIIGAAVSFL. Residues 712–719 lie on the Extracellular side of the membrane; sequence TRDQPNVQ. A helical transmembrane segment spans residues 720–740; sequence FCIVALVIIFCSTITLCLVFV. The Cytoplasmic portion of the chain corresponds to 741–940; that stretch reads PKLITLRTNP…PSFRVMVSGL (200 aa). The disordered stretch occupies residues 762–789; that stretch reads TQNQKKEDSKTSTSVTSVNQASTSRLEG. Over residues 772 to 786 the composition is skewed to polar residues; the sequence is TSTSVTSVNQASTSR. Residues serine 775 and serine 778 each carry the phosphoserine modification. Residues 781–818 are a coiled coil; it reads QASTSRLEGLQSENHRLRMKITELDKDLEEVTMQLQDT. Phosphothreonine is present on threonine 818. Phosphoserine occurs at positions 883, 892, 912, 915, 919, and 923.

Belongs to the G-protein coupled receptor 3 family. GABA-B receptor subfamily. In terms of assembly, heterodimer of GABBR1 and GABBR2. Homodimers may form, but are inactive. Interacts (via C-terminus) with ATF4 (via leucine zipper domain).

The protein localises to the cell membrane. The protein resides in the postsynaptic cell membrane. In terms of biological role, component of a heterodimeric G-protein coupled receptor for GABA, formed by GABBR1 and GABBR2. Within the heterodimeric GABA receptor, only GABBR1 seems to bind agonists, while GABBR2 mediates coupling to G proteins. Ligand binding causes a conformation change that triggers signaling via guanine nucleotide-binding proteins (G proteins) and modulates the activity of down-stream effectors, such as adenylate cyclase. Signaling inhibits adenylate cyclase, stimulates phospholipase A2, activates potassium channels, inactivates voltage-dependent calcium-channels and modulates inositol phospholipid hydrolysis. Plays a critical role in the fine-tuning of inhibitory synaptic transmission. Pre-synaptic GABA receptor inhibits neurotransmitter release by down-regulating high-voltage activated calcium channels, whereas postsynaptic GABA receptor decreases neuronal excitability by activating a prominent inwardly rectifying potassium (Kir) conductance that underlies the late inhibitory postsynaptic potentials. Not only implicated in synaptic inhibition but also in hippocampal long-term potentiation, slow wave sleep, muscle relaxation and antinociception. Interacts with KCTD8, KCTD12 and KCTD16; this interaction determines the pharmacology and kinetics of the receptor response, the KCTD proteins markedly accelerating the GABA-B response, although to different extents. This chain is Gamma-aminobutyric acid type B receptor subunit 2 (Gabbr2), found in Mus musculus (Mouse).